The following is a 500-amino-acid chain: Lysine--tRNA ligase (500 aa).

Residues Glu410 and Glu417 each contribute to the Mg(2+) site.

This sequence belongs to the class-II aminoacyl-tRNA synthetase family. As to quaternary structure, homodimer. Mg(2+) is required as a cofactor.

The protein resides in the cytoplasm. The enzyme catalyses tRNA(Lys) + L-lysine + ATP = L-lysyl-tRNA(Lys) + AMP + diphosphate. The sequence is that of Lysine--tRNA ligase from Pseudomonas putida (strain ATCC 700007 / DSM 6899 / JCM 31910 / BCRC 17059 / LMG 24140 / F1).